The primary structure comprises 406 residues: Argininosuccinate synthase (406 aa).

Residues 12–20 and alanine 39 each bind ATP; that span reads AYSGGLDTS. The L-citrulline site is built by tyrosine 90 and serine 95. ATP is bound at residue glycine 120. L-aspartate is bound by residues threonine 122, asparagine 126, and aspartate 127. Asparagine 126 lines the L-citrulline pocket. The L-citrulline site is built by arginine 130, serine 179, serine 188, glutamate 264, and tyrosine 276.

Belongs to the argininosuccinate synthase family. Type 1 subfamily. Homotetramer.

It is found in the cytoplasm. It catalyses the reaction L-citrulline + L-aspartate + ATP = 2-(N(omega)-L-arginino)succinate + AMP + diphosphate + H(+). The protein operates within amino-acid biosynthesis; L-arginine biosynthesis; L-arginine from L-ornithine and carbamoyl phosphate: step 2/3. This Geotalea uraniireducens (strain Rf4) (Geobacter uraniireducens) protein is Argininosuccinate synthase.